Reading from the N-terminus, the 436-residue chain is Anaerobic glycerol-3-phosphate dehydrogenase subunit B (436 aa).

This sequence belongs to the anaerobic G-3-P dehydrogenase subunit B family. As to quaternary structure, composed of a catalytic GlpA/B dimer and of membrane bound GlpC. Requires FMN as cofactor.

The catalysed reaction is a quinone + sn-glycerol 3-phosphate = dihydroxyacetone phosphate + a quinol. The protein operates within polyol metabolism; glycerol degradation via glycerol kinase pathway; glycerone phosphate from sn-glycerol 3-phosphate (anaerobic route): step 1/1. Functionally, conversion of glycerol 3-phosphate to dihydroxyacetone. Uses fumarate or nitrate as electron acceptor. The sequence is that of Anaerobic glycerol-3-phosphate dehydrogenase subunit B from Vibrio cholerae serotype O1 (strain M66-2).